The primary structure comprises 414 residues: COUP transcription factor 2 (414 aa).

The interval 1–72 (MAMVVSTWRD…PGGPGSDKQQ (72 aa)) is disordered. The span at 27 to 37 (PPVPGPPPGAP) shows a compositional bias: pro residues. The span at 38 to 57 (HTPQTPGQGGPASTPAQTAA) shows a compositional bias: low complexity. Thr-51 is modified (phosphothreonine). Over residues 58–67 (GGQGGPGGPG) the composition is skewed to gly residues. Positions 76–151 (HIECVVCGDK…VGMRREAVQR (76 aa)) form a DNA-binding region, nuclear receptor. NR C4-type zinc fingers lie at residues 79–99 (CVVC…CEGC) and 115–139 (CRAN…LKKC). The segment at 117–414 (ANRNCPIDQH…SFNWPYMAIQ (298 aa)) is interaction with ZFPM2. Residues 177–403 (YLSGYISLLL…TLIRDMLLSG (227 aa)) form the NR LBD domain. The segment at 337–414 (LQEKSQCALE…SFNWPYMAIQ (78 aa)) is important for dimerization.

It belongs to the nuclear hormone receptor family. NR2 subfamily. As to quaternary structure, interacts with SQSTM1. Binds DNA as a dimer; homodimer or heterodimer with NR2F6. Interacts with NCOA1, NCOA2, NCOA3 and PPARGC1A. Interacts with ZFPM2. Ubiquitous. Expressed in the stromal cells of developing fetal ovaries.

The protein resides in the nucleus. In terms of biological role, ligand-activated transcription factor. Activated by high concentrations of 9-cis-retinoic acid and all-trans-retinoic acid, but not by dexamethasone, cortisol or progesterone (in vitro). Regulation of the apolipoprotein A-I gene transcription. Binds to DNA site A. May be required to establish ovary identity during early gonad development. The protein is COUP transcription factor 2 (NR2F2) of Homo sapiens (Human).